The sequence spans 479 residues: Ribosomal lysine N-methyltransferase 2 (479 aa).

The region spanning 22 to 325 (PNISICESPE…INEELFLNYG (304 aa)) is the SET domain. Y324 contacts S-adenosyl-L-methionine.

It belongs to the class V-like SAM-binding methyltransferase superfamily. RKM2 family.

In terms of biological role, S-adenosyl-L-methionine-dependent protein-lysine N-methyltransferase that trimethylates 60S ribosomal protein L12 (RPL12A and RPL12B) at 'Lys-4' and 'Lys-11'. The protein is Ribosomal lysine N-methyltransferase 2 of Saccharomyces cerevisiae (strain ATCC 204508 / S288c) (Baker's yeast).